Here is a 114-residue protein sequence, read N- to C-terminus: Protein vCCL3 (114 aa).

The signal sequence occupies residues 1 to 26 (MWSMCWVLRAHLGLLFWVAVIELCAA).

Functionally, acts as a highly selective agonist for human lymphoactin receptor XCR1. In Human herpesvirus 8 type P (isolate GK18) (HHV-8), this protein is Protein vCCL3 (K4.1).